Reading from the N-terminus, the 275-residue chain is NH(3)-dependent NAD(+) synthetase (275 aa).

Residue 46–53 (GISGGQDS) participates in ATP binding. Asp-52 lines the Mg(2+) pocket. Arg-140 serves as a coordination point for deamido-NAD(+). An ATP-binding site is contributed by Thr-160. Glu-165 contacts Mg(2+). Positions 173 and 180 each coordinate deamido-NAD(+). 2 residues coordinate ATP: Lys-189 and Thr-211. 260–261 (HK) lines the deamido-NAD(+) pocket.

This sequence belongs to the NAD synthetase family. As to quaternary structure, homodimer.

The catalysed reaction is deamido-NAD(+) + NH4(+) + ATP = AMP + diphosphate + NAD(+) + H(+). It participates in cofactor biosynthesis; NAD(+) biosynthesis; NAD(+) from deamido-NAD(+) (ammonia route): step 1/1. Catalyzes the ATP-dependent amidation of deamido-NAD to form NAD. Uses ammonia as a nitrogen source. The chain is NH(3)-dependent NAD(+) synthetase from Shigella boydii serotype 4 (strain Sb227).